The sequence spans 161 residues: Nucleotide-binding protein BamMC406_2474 (161 aa).

It belongs to the YajQ family.

In terms of biological role, nucleotide-binding protein. This chain is Nucleotide-binding protein BamMC406_2474, found in Burkholderia ambifaria (strain MC40-6).